A 582-amino-acid chain; its full sequence is Trans-ocimene synthase, chloroplastic (582 aa).

Residues 1–35 constitute a chloroplast transit peptide; the sequence is MSLIIQSLPHWSRIPPRPPQLSQFQNSSRPKPLIQ. (2E)-geranyl diphosphate-binding residues include Arg-296, Asp-333, Asp-337, Arg-474, and Asp-477. Positions 333 and 337 each coordinate Mg(2+). Residues 333–337 carry the DDXXD motif motif; sequence DDIYD. Residues Asp-477, Thr-481, and Glu-485 each contribute to the Mg(2+) site.

It belongs to the terpene synthase family. Tpsb subfamily. As to quaternary structure, monomer. The cofactor is Mg(2+). Requires Mn(2+) as cofactor. In terms of tissue distribution, expressed in male and female leaves. Barely detectable in fruits and shoots.

Its subcellular location is the plastid. It localises to the chloroplast. The enzyme catalyses (2E)-geranyl diphosphate = (E)-beta-ocimene + diphosphate. Its pathway is secondary metabolite biosynthesis; terpenoid biosynthesis. In terms of biological role, monoterpene synthase (TPS) involved in the biosynthesis of monoterpene natural products used by traditional Chinese medicine to treat headache, inflammation and intoxication. Catalyzes the conversion of (2E)-geranyl diphosphate (GPP) into (E)-beta-ocimene. This Litsea cubeba (Aromatic litsea) protein is Trans-ocimene synthase, chloroplastic.